The chain runs to 81 residues: Putative defensin-like protein 148 (81 aa).

The first 24 residues, 1 to 24, serve as a signal peptide directing secretion; the sequence is MIKSFQLSFTVLIVFTVLILGVVG. Intrachain disulfides connect cysteine 34–cysteine 80, cysteine 43–cysteine 63, cysteine 48–cysteine 74, and cysteine 52–cysteine 76.

It belongs to the DEFL family.

It is found in the secreted. The sequence is that of Putative defensin-like protein 148 (LCR4) from Arabidopsis thaliana (Mouse-ear cress).